The chain runs to 351 residues: Photosystem II D2 protein (351 aa).

A helical membrane pass occupies residues 39 to 59 (TAYLAAGGWFTGTTFVTSWYT). Position 116 (histidine 116) interacts with chlorophyll a. A helical membrane pass occupies residues 123–139 (GFCLRQFEIARLVGIRP). Positions 128 and 141 each coordinate pheophytin a. Residues 151 to 164 (VFVSVFLLYPLGQA) traverse the membrane as a helical segment. Histidine 196 serves as a coordination point for chlorophyll a. A helical transmembrane segment spans residues 206-226 (GALLCAIHGATVENTLFEDGD). A plastoquinone-binding residues include histidine 213 and phenylalanine 260. Histidine 213 provides a ligand contact to Fe cation. Histidine 267 is a Fe cation binding site. Residues 277–293 (GLWTSSIGIVGLALNLR) traverse the membrane as a helical segment.

This sequence belongs to the reaction center PufL/M/PsbA/D family. As to quaternary structure, PSII is composed of 1 copy each of membrane proteins PsbA, PsbB, PsbC, PsbD, PsbE, PsbF, PsbH, PsbI, PsbJ, PsbK, PsbL, PsbM, PsbT, PsbX, PsbY, PsbZ, Psb30/Ycf12, at least 3 peripheral proteins of the oxygen-evolving complex and a large number of cofactors. It forms dimeric complexes. Requires The D1/D2 heterodimer binds P680, chlorophylls that are the primary electron donor of PSII, and subsequent electron acceptors. It shares a non-heme iron and each subunit binds pheophytin, quinone, additional chlorophylls, carotenoids and lipids. There is also a Cl(-1) ion associated with D1 and D2, which is required for oxygen evolution. The PSII complex binds additional chlorophylls, carotenoids and specific lipids. as cofactor.

The protein resides in the plastid. Its subcellular location is the chloroplast thylakoid membrane. The enzyme catalyses 2 a plastoquinone + 4 hnu + 2 H2O = 2 a plastoquinol + O2. In terms of biological role, photosystem II (PSII) is a light-driven water:plastoquinone oxidoreductase that uses light energy to abstract electrons from H(2)O, generating O(2) and a proton gradient subsequently used for ATP formation. It consists of a core antenna complex that captures photons, and an electron transfer chain that converts photonic excitation into a charge separation. The D1/D2 (PsbA/PsbD) reaction center heterodimer binds P680, the primary electron donor of PSII as well as several subsequent electron acceptors. D2 is needed for assembly of a stable PSII complex. In Thalassiosira pseudonana (Marine diatom), this protein is Photosystem II D2 protein.